The following is a 278-amino-acid chain: Phage-like element PBSX protein XkdB (278 aa).

The segment at residues 58-80 (LKAREMAAVFGVSEKTVRRWLEL) is a DNA-binding region (H-T-H motif). 2 disordered regions span residues 117–136 (SLKE…RTDI) and 239–278 (QHER…RKQV). A compositionally biased stretch (basic and acidic residues) spans 248-263 (KTNNRTDFGRAEKRET).

This sequence to B.subtilis YqaL.

The polypeptide is Phage-like element PBSX protein XkdB (xkdB) (Bacillus subtilis (strain 168)).